The following is a 247-amino-acid chain: HTH-type transcriptional regulator SarU (247 aa).

2 consecutive DNA-binding regions (H-T-H motif) follow at residues 53-76 and 178-201; these read LKEI…SLSK and LKDL…RLNN.

This sequence belongs to the SarA family.

The protein localises to the cytoplasm. Functionally, positive regulator of RNAII and RNAIII in a cell density-dependent manner. It can contribute to the expression of virulence genes controlled by agr. May also regulate target genes via an agr-independent pathway. The chain is HTH-type transcriptional regulator SarU (sarU) from Staphylococcus aureus (strain COL).